A 603-amino-acid chain; its full sequence is Probable methyltransferase-like protein 25 (603 aa).

The tract at residues 326-352 is disordered; that stretch reads TSSQQIPNRETSEANKERRKMTSKSSE.

Its function is as follows. Probable methyltransferase. This chain is Probable methyltransferase-like protein 25 (METTL25), found in Homo sapiens (Human).